Consider the following 489-residue polypeptide: Nitrogenase molybdenum-iron protein alpha chain (489 aa).

Positions 71, 97, and 163 each coordinate [8Fe-7S] cluster. 2 residues coordinate [7Fe-Mo-9S-C-homocitryl] cluster: Cys284 and His451.

Belongs to the NifD/NifK/NifE/NifN family. As to quaternary structure, tetramer of two alpha and two beta chains. Forms complex with the iron protein (nitrogenase component 2). [8Fe-7S] cluster is required as a cofactor. Requires [7Fe-Mo-9S-C-homocitryl] cluster as cofactor.

The catalysed reaction is N2 + 8 reduced [2Fe-2S]-[ferredoxin] + 16 ATP + 16 H2O = H2 + 8 oxidized [2Fe-2S]-[ferredoxin] + 2 NH4(+) + 16 ADP + 16 phosphate + 6 H(+). Its function is as follows. This molybdenum-iron protein is part of the nitrogenase complex that catalyzes the key enzymatic reactions in nitrogen fixation. In Acidithiobacillus ferridurans, this protein is Nitrogenase molybdenum-iron protein alpha chain (nifD).